The chain runs to 317 residues: Protein lifeguard 2 (317 aa).

A disordered region spans residues 1 to 54 (MTQGKLSVANKAPGTEGQQHQANGEKKDAPAVPSAPPSYEEATSGEGLKAGTFP). Transmembrane regions (helical) follow at residues 107–127 (VYTILLVQLLVTLAVVALFTF), 139–159 (PGWYWASYAVFFATYLTLACC), and 166–186 (FPWNLILLTIFTLSMAYLTGM). N-linked (GlcNAc...) asparagine glycosylation occurs at Asn192. A run of 4 helical transmembrane segments spans residues 195 to 215 (SVLLCLVITALVCLSVTIFSF), 226 to 246 (GVLFVLLMTLFFSGLLLAVLL), 252 to 272 (PWLHAVYAVLGAGVFTLFLAF), and 291 to 311 (IFGALNIYLDIIYIFTFFLQL).

This sequence belongs to the BI1 family. LFG subfamily. As to quaternary structure, interacts with FAS/TNFRSF6 and BAX. In terms of tissue distribution, brain. Highly expressed in cerebellum, also found in cortex, olfactory bulb, and hippocampus.

Its subcellular location is the cell membrane. The protein localises to the membrane raft. It is found in the postsynaptic cell membrane. Functionally, antiapoptotic protein which protects cells uniquely from Fas-induced apoptosis. Regulates Fas-mediated apoptosis in neurons by interfering with caspase-8 activation. Plays a role in cerebellar development by affecting cerebellar size, internal granular layer (IGL) thickness, and Purkinje cell (PC) development. In Mus musculus (Mouse), this protein is Protein lifeguard 2 (Faim2).